Consider the following 201-residue polypeptide: NAD(P)H dehydrogenase (quinone) (201 aa).

The 186-residue stretch at 7-192 (ILVLYYSMYG…SIARYQGEYV (186 aa)) folds into the Flavodoxin-like domain. FMN-binding positions include 13–18 (SMYGHI) and 81–83 (TRF). Y15 provides a ligand contact to NAD(+). W101 contributes to the substrate binding site. FMN contacts are provided by residues 116-121 (STGTGG) and H136.

It belongs to the WrbA family. FMN is required as a cofactor.

It catalyses the reaction a quinone + NADH + H(+) = a quinol + NAD(+). It carries out the reaction a quinone + NADPH + H(+) = a quinol + NADP(+). This Shigella sonnei (strain Ss046) protein is NAD(P)H dehydrogenase (quinone).